Consider the following 450-residue polypeptide: uncharacterized protein (450 aa).

Basic and acidic residues predominate over residues 387-416 (ELDEKNNNKEENKNQDLHEPKESSSEDLLK). The disordered stretch occupies residues 387 to 439 (ELDEKNNNKEENKNQDLHEPKESSSEDLLKRLNNLKINTNEGPVQDNENHDNE).

This is an uncharacterized protein from Saccharomyces cerevisiae (strain ATCC 204508 / S288c) (Baker's yeast).